We begin with the raw amino-acid sequence, 104 residues long: MEKYAFRMRLHPGKAAEYQARHDAIWPELVTLLKDAGVSDYSIHLDEENCLLFGVLWRSDDHRMGDLPSHPVMRKWWAHMADIMETRADNEPVAVPLKTVFHLK.

Tyrosine 18 contributes to the substrate binding site. Histidine 22 serves as the catalytic Proton donor. Residues tyrosine 41 and 76 to 77 (WW) contribute to the substrate site.

The protein belongs to the rhamnose mutarotase family. In terms of assembly, homodimer.

Its subcellular location is the cytoplasm. It carries out the reaction alpha-L-rhamnose = beta-L-rhamnose. The protein operates within carbohydrate metabolism; L-rhamnose metabolism. In terms of biological role, involved in the anomeric conversion of L-rhamnose. The protein is L-rhamnose mutarotase of Rhizobium meliloti (strain 1021) (Ensifer meliloti).